Here is a 266-residue protein sequence, read N- to C-terminus: Orcokinin peptides type B (266 aa).

Positions 1–20 are cleaved as a signal peptide; it reads MTAQMFTIALLLSLSAIAAA. Propeptides lie at residues 21–46, 240–246, and 264–266; these read GTIK…GAPV, DYDVFPD, and NVE.

This sequence belongs to the orcokinin family.

It localises to the secreted. Its function is as follows. Myotropic peptides that enhance both the frequency and amplitude of spontaneous hindgut contractions. The chain is Orcokinin peptides type B from Procambarus clarkii (Red swamp crayfish).